The chain runs to 234 residues: MVINIFYICTGEYKRFFDKFYLSCEDKFIPEFGKKYYVFTDSDRIYFSKYLNVEVINVEKNCWPLNTLLRFSYFLKVIDKLQTNSYTFFFNANAVIVKEIPFSTFMESDLIGVIHPGYKNRISILYPWERRKNATCYLGYLKKGIYYQGCFNGGKTASFKRLIQICNMMTMADLKKNLIAKVHDESYLNYYYYYNKPLLLSELYSWPEKYGENKDAKIIMRDKERESWYGNIKK.

Substrate-binding positions include 8 to 13, 93 to 95, and 115 to 118; these read ICTGEY, NAV, and HPGY. The active-site Nucleophile is Glu-185.

Belongs to the glycosyltransferase 6 family. It depends on Mn(2+) as a cofactor.

It carries out the reaction alpha-L-Fuc-(1-&gt;2)-beta-D-Gal-(1-&gt;3)-alpha-D-GalNAc-(1-&gt;3)-alpha-D-GalNAc-di-trans,octa-cis-undecaprenyl diphosphate + UDP-alpha-D-galactose = alpha-L-Fuc-(1-&gt;2)-[alpha-D-Gal-(1-&gt;3)]-beta-D-Gal-(1-&gt;3)-alpha-D-GalNAc-(1-&gt;3)-alpha-D-GalNAc-di-trans,octa-cis-undecaprenyl diphosphate + UDP + H(+). It participates in bacterial outer membrane biogenesis; LPS O-antigen biosynthesis. In terms of biological role, involved in the assembly of the O-repeating unit during O-antigen biosynthesis. This Escherichia coli protein is O-antigen biosynthesis glycosyltransferase WbnI.